A 246-amino-acid polypeptide reads, in one-letter code: 1-(5-phosphoribosyl)-5-[(5-phosphoribosylamino)methylideneamino] imidazole-4-carboxamide isomerase (246 aa).

Asp8 acts as the Proton acceptor in catalysis. Catalysis depends on Asp129, which acts as the Proton donor.

This sequence belongs to the HisA/HisF family.

It is found in the cytoplasm. It carries out the reaction 1-(5-phospho-beta-D-ribosyl)-5-[(5-phospho-beta-D-ribosylamino)methylideneamino]imidazole-4-carboxamide = 5-[(5-phospho-1-deoxy-D-ribulos-1-ylimino)methylamino]-1-(5-phospho-beta-D-ribosyl)imidazole-4-carboxamide. Its pathway is amino-acid biosynthesis; L-histidine biosynthesis; L-histidine from 5-phospho-alpha-D-ribose 1-diphosphate: step 4/9. In Methylocella silvestris (strain DSM 15510 / CIP 108128 / LMG 27833 / NCIMB 13906 / BL2), this protein is 1-(5-phosphoribosyl)-5-[(5-phosphoribosylamino)methylideneamino] imidazole-4-carboxamide isomerase.